The sequence spans 342 residues: Photosystem II assembly lipoprotein Ycf48 (342 aa).

The first 28 residues, Met-1 to Ser-28, serve as a signal peptide directing secretion. A lipid anchor (N-palmitoyl cysteine) is attached at Cys-29. Cys-29 carries S-diacylglycerol cysteine lipidation. The Arg-rich patch motif lies at Arg-196–Arg-220. Positions Met-340–Pro-342 are excised as a propeptide.

It belongs to the Ycf48 family. Part of early PSII assembly complexes which includes D1 (psbA) and PsbI; not found in mature PSII. By two-hybrid analysis in yeast interacts with precursor and intermediate forms of D1, but less with mature D1. Binds to the lumenal side of PSI and PSII complexes. Coimmunoprecipitates with YidC. Purified chlorophyll- and carotenoid-containing photosystem II (PSII) assembly intermediate complex RCII* (iD1, D1, D2, PsbE, PsbF, PsbI, Ycf39, Ycf48, HliC and HliD). Post-translationally, the last 3 residues are removed in the mature protein.

The protein localises to the cellular thylakoid membrane. In terms of biological role, a factor required for optimal assembly of photosystem II (PSII) which acts in the early stages of PSII assembly. Also plays a role in replacement of photodamaged D1 (psbA). May interact with precursor D1 to prevent its premature processing before association with D2 (psbD). May also play a role in chlorophyll insertion into chlorophyll-binding proteins. Increasing levels of chlorophyll precursors partially suppresses deletion of this protein, supporting the idea that Ycf48 assists YidC in synthesis of chlorophyll-binding proteins. The Ycf39-Hlip complex binds D1 at an early stage of PSII assembly along with Ycf48, ribosomes and ChlG, the last enzyme in chlorophyll biosynthesis; it may be involved in chlorophyll reuse and delivery to D1 in the initial stages of PSII assembly. The sequence is that of Photosystem II assembly lipoprotein Ycf48 from Synechocystis sp. (strain ATCC 27184 / PCC 6803 / Kazusa).